The following is a 489-amino-acid chain: Rhamnulokinase (489 aa).

13 to 17 serves as a coordination point for ATP; sequence ASSGR. Residues Cys-68 and Cys-222 are joined by a disulfide bond. Substrate contacts are provided by residues Gly-83 and 236-238; that span reads HDT. Residue Asp-237 is the Proton acceptor of the active site. Thr-259 lines the ATP pocket. Substrate is bound at residue Asn-296. Gln-304 is a binding site for ATP. Cys-353 and Cys-370 are joined by a disulfide. Position 402 (Gly-402) interacts with ATP. Cys-413 and Cys-417 form a disulfide bridge.

It belongs to the rhamnulokinase family. In terms of assembly, monomer. It depends on Mg(2+) as a cofactor.

It carries out the reaction L-rhamnulose + ATP = L-rhamnulose 1-phosphate + ADP + H(+). It participates in carbohydrate degradation; L-rhamnose degradation; glycerone phosphate from L-rhamnose: step 2/3. Its function is as follows. Involved in the catabolism of L-rhamnose (6-deoxy-L-mannose). Catalyzes the transfer of the gamma-phosphate group from ATP to the 1-hydroxyl group of L-rhamnulose to yield L-rhamnulose 1-phosphate. The sequence is that of Rhamnulokinase from Escherichia coli (strain 55989 / EAEC).